The primary structure comprises 641 residues: Ribosomal oxygenase 1 (641 aa).

Met1 carries the N-acetylmethionine modification. 2 disordered regions span residues Met1–Arg35 and Arg54–Pro80. A compositionally biased stretch (basic residues) spans Arg12 to Gln23. Phosphoserine occurs at positions 60, 63, and 109. The region spanning Cys294–Ala439 is the JmjC domain. His340, Asp342, and His405 together coordinate Fe cation.

It belongs to the ROX family. NO66 subfamily. As to quaternary structure, interacts with SP7/OSX; the interaction is direct. Interacts with MYC. Interacts with PHF19; leading to its recruitment to H3K36me3 sites. Fe(2+) is required as a cofactor. In terms of tissue distribution, widely expressed. Overexpressed in lung carcinomas.

It localises to the nucleus. The protein resides in the nucleolus. Its subcellular location is the nucleoplasm. The enzyme catalyses N(6),N(6)-dimethyl-L-lysyl(36)-[histone H3] + 2 2-oxoglutarate + 2 O2 = L-lysyl(36)-[histone H3] + 2 formaldehyde + 2 succinate + 2 CO2. It carries out the reaction N(6)-methyl-L-lysyl-[protein] + 2-oxoglutarate + O2 = L-lysyl-[protein] + formaldehyde + succinate + CO2. It catalyses the reaction L-histidyl-[protein] + 2-oxoglutarate + O2 = (3S)-3-hydroxy-L-histidyl-[protein] + succinate + CO2. Oxygenase that can act as both a histone lysine demethylase and a ribosomal histidine hydroxylase. Specifically demethylates 'Lys-4' (H3K4me) and 'Lys-36' (H3K36me) of histone H3, thereby playing a central role in histone code. Preferentially demethylates trimethylated H3 'Lys-4' (H3K4me3) and monomethylated H3 'Lys-4' (H3K4me1) residues, while it has weaker activity for dimethylated H3 'Lys-36' (H3K36me2). Acts as a regulator of osteoblast differentiation via its interaction with SP7/OSX by demethylating H3K4me and H3K36me, thereby inhibiting SP7/OSX-mediated promoter activation. Also catalyzes demethylation of non-histone proteins, such as CGAS: demethylation of monomethylated CGAS promotes interaction between CGAS and PARP1, followed by PARP1 inactivation. Also catalyzes the hydroxylation of 60S ribosomal protein L8 on 'His-216', thereby playing a role in ribosome biogenesis. Participates in MYC-induced transcriptional activation. This Homo sapiens (Human) protein is Ribosomal oxygenase 1.